A 179-amino-acid chain; its full sequence is Large ribosomal subunit protein uL5 (179 aa).

The protein belongs to the universal ribosomal protein uL5 family. As to quaternary structure, part of the 50S ribosomal subunit; part of the 5S rRNA/L5/L18/L25 subcomplex. Contacts the 5S rRNA and the P site tRNA. Forms a bridge to the 30S subunit in the 70S ribosome.

In terms of biological role, this is one of the proteins that bind and probably mediate the attachment of the 5S RNA into the large ribosomal subunit, where it forms part of the central protuberance. In the 70S ribosome it contacts protein S13 of the 30S subunit (bridge B1b), connecting the 2 subunits; this bridge is implicated in subunit movement. Contacts the P site tRNA; the 5S rRNA and some of its associated proteins might help stabilize positioning of ribosome-bound tRNAs. In Salmonella arizonae (strain ATCC BAA-731 / CDC346-86 / RSK2980), this protein is Large ribosomal subunit protein uL5.